The sequence spans 144 residues: Bacilliredoxin BrxA (144 aa).

Active-site nucleophile residues include Cys53 and Cys55. Residue Cys53 is modified to S-bacillithiol cysteine disulfide. The CXC active site motif signature appears at 53 to 55 (CGC). An intrachain disulfide couples Cys53 to Cys55.

Belongs to the bacilliredoxin family. N-terminal Cys of the CXC active site motif can react with bacillithiol (BSH) to form mixed disulfides. S-bacillithiolation protects Cys residues against overoxidation by acting as a redox switch in response to oxidative stress.

Its function is as follows. S-bacillithiolation is the formation of mixed disulfide bonds between protein thiols and the general thiol reductant bacillithiol (BSH) under oxidative stress. BSH is an equivalent of glutathione (GSH) in Firmicutes. This protein is a dithiol bacilliredoxin, which debacillithiolates (removes BSH) the S-bacillithiolated OhrR (OhrR-SSB) in vitro and in vivo NaOCl-generated S-bacillithiolated MetE (MetE-SSB). Involved in maintaining redox homeostasis in response to disulfide stress conditions. Has a redox potential of -130 mV. Displays weak protein disulfide isomerase activity in vitro. This is Bacilliredoxin BrxA from Bacillus subtilis (strain 168).